A 233-amino-acid polypeptide reads, in one-letter code: Large ribosomal subunit protein uL1 (233 aa).

It belongs to the universal ribosomal protein uL1 family. Part of the 50S ribosomal subunit.

Its function is as follows. Binds directly to 23S rRNA. The L1 stalk is quite mobile in the ribosome, and is involved in E site tRNA release. In terms of biological role, protein L1 is also a translational repressor protein, it controls the translation of the L11 operon by binding to its mRNA. This chain is Large ribosomal subunit protein uL1, found in Marinomonas sp. (strain MWYL1).